Reading from the N-terminus, the 328-residue chain is Tetraacyldisaccharide 4'-kinase (328 aa).

Residue Thr55–Thr62 participates in ATP binding.

The protein belongs to the LpxK family.

It carries out the reaction a lipid A disaccharide + ATP = a lipid IVA + ADP + H(+). It participates in glycolipid biosynthesis; lipid IV(A) biosynthesis; lipid IV(A) from (3R)-3-hydroxytetradecanoyl-[acyl-carrier-protein] and UDP-N-acetyl-alpha-D-glucosamine: step 6/6. Transfers the gamma-phosphate of ATP to the 4'-position of a tetraacyldisaccharide 1-phosphate intermediate (termed DS-1-P) to form tetraacyldisaccharide 1,4'-bis-phosphate (lipid IVA). The protein is Tetraacyldisaccharide 4'-kinase of Yersinia enterocolitica serotype O:8 / biotype 1B (strain NCTC 13174 / 8081).